Here is a 290-residue protein sequence, read N- to C-terminus: ATP synthase gamma chain (290 aa).

Belongs to the ATPase gamma chain family. F-type ATPases have 2 components, CF(1) - the catalytic core - and CF(0) - the membrane proton channel. CF(1) has five subunits: alpha(3), beta(3), gamma(1), delta(1), epsilon(1). CF(0) has three main subunits: a, b and c.

Its subcellular location is the cell inner membrane. Produces ATP from ADP in the presence of a proton gradient across the membrane. The gamma chain is believed to be important in regulating ATPase activity and the flow of protons through the CF(0) complex. This is ATP synthase gamma chain from Anaeromyxobacter sp. (strain K).